The sequence spans 858 residues: Leucine--tRNA ligase (858 aa).

The 'HIGH' region signature appears at 42-52 (PYPSGRLHMGH). The 'KMSKS' region signature appears at 618–622 (KMSKS). Residue Lys-621 coordinates ATP.

The protein belongs to the class-I aminoacyl-tRNA synthetase family.

Its subcellular location is the cytoplasm. The catalysed reaction is tRNA(Leu) + L-leucine + ATP = L-leucyl-tRNA(Leu) + AMP + diphosphate. This is Leucine--tRNA ligase from Aliivibrio fischeri (strain MJ11) (Vibrio fischeri).